Reading from the N-terminus, the 799-residue chain is Protein phosphatase 1 regulatory subunit 3F (799 aa).

The tract at residues 1–30 is disordered; that stretch reads MARTAPVEPPLRHPAPPSPAAGEPRASAEA. The Cytoplasmic segment spans residues 1 to 772; the sequence is MARTAPVEPP…LTQTLGVLAG (772 aa). The span at 7 to 19 shows a compositional bias: pro residues; the sequence is VEPPLRHPAPPSP. The residue at position 18 (Ser18) is a Phosphoserine. The segment covering 20–30 has biased composition (low complexity); the sequence is AAGEPRASAEA. Residues 36–39 carry the PP1-binding motif motif; it reads RVLF. Disordered stretches follow at residues 53–108, 201–235, 332–353, and 417–439; these read RYRP…PVPA, SPPG…SPDD, RRRP…LAEH, and ATCG…DRAA. The span at 78 to 97 shows a compositional bias: acidic residues; sequence ADEEDDGEDGDEGEEEEEAF. One can recognise a CBM21 domain in the interval 127–283; sequence LERLGRVMVE…NNHGRNYTVL (157 aa). Basic and acidic residues predominate over residues 334-353; that stretch reads RPFEEEPRMRSADDNTLAEH. A Phosphoserine modification is found at Ser545. Disordered stretches follow at residues 566-600, 663-688, and 722-743; these read KDTE…PPEI, SKSP…SWVP, and PHVN…KRSP. Over residues 569–579 the composition is skewed to acidic residues; sequence EDPDDEGEGED. Low complexity predominate over residues 585–594; that stretch reads PSSPEGGSPK. Phosphoserine occurs at positions 587 and 592. The segment covering 679–688 has biased composition (basic and acidic residues); it reads PTERESSWVP. The chain crosses the membrane as a helical span at residues 773 to 793; the sequence is LVMVPVALNSGVSLLVLVLCL. At 794-799 the chain is on the extracellular side; that stretch reads SLAWFS.

As to expression, highly expressed in brain (at protein level).

It localises to the membrane. Its function is as follows. Glycogen-targeting subunit for protein phosphatase 1 (PP1). This is Protein phosphatase 1 regulatory subunit 3F (Ppp1r3f) from Mus musculus (Mouse).